The sequence spans 315 residues: Ninja-family protein 1 (315 aa).

Disordered stretches follow at residues 1–28, 68–142, and 156–237; these read MASRDFLGRFGGEKGAASDKAGGGAGEA, SLPG…AQEP, and DQGN…TGDL. The span at 99–108 shows a compositional bias: basic and acidic residues; it reads ERWRRREMQS. The segment covering 156–166 has biased composition (polar residues); the sequence is DQGNPSSSMPE. 2 stretches are compositionally biased toward low complexity: residues 184-197 and 221-234; these read SSDNNNNASNQNKS and LRTLRSLTMRTTST.

It belongs to the Ninja family.

It is found in the nucleus. This Triticum aestivum (Wheat) protein is Ninja-family protein 1 (AFP-A1).